An 84-amino-acid chain; its full sequence is U8-theraphotoxin-Hhn1g (84 aa).

A signal peptide spans 1–21 (MKVVLLVCLVWMMAMMELVSC). Disulfide bonds link cysteine 23–cysteine 35, cysteine 29–cysteine 44, cysteine 34–cysteine 67, cysteine 54–cysteine 75, and cysteine 69–cysteine 81.

Belongs to the AVIT (prokineticin) family. In terms of tissue distribution, expressed by the venom gland.

Its subcellular location is the secreted. The sequence is that of U8-theraphotoxin-Hhn1g from Cyriopagopus hainanus (Chinese bird spider).